The following is a 365-amino-acid chain: UDP-N-acetylglucosamine--N-acetylmuramyl-(pentapeptide) pyrophosphoryl-undecaprenol N-acetylglucosamine transferase (365 aa).

UDP-N-acetyl-alpha-D-glucosamine contacts are provided by residues 12–14 (TGG), N128, R169, S195, and Q296.

This sequence belongs to the glycosyltransferase 28 family. MurG subfamily.

It is found in the cell inner membrane. The catalysed reaction is di-trans,octa-cis-undecaprenyl diphospho-N-acetyl-alpha-D-muramoyl-L-alanyl-D-glutamyl-meso-2,6-diaminopimeloyl-D-alanyl-D-alanine + UDP-N-acetyl-alpha-D-glucosamine = di-trans,octa-cis-undecaprenyl diphospho-[N-acetyl-alpha-D-glucosaminyl-(1-&gt;4)]-N-acetyl-alpha-D-muramoyl-L-alanyl-D-glutamyl-meso-2,6-diaminopimeloyl-D-alanyl-D-alanine + UDP + H(+). Its pathway is cell wall biogenesis; peptidoglycan biosynthesis. Cell wall formation. Catalyzes the transfer of a GlcNAc subunit on undecaprenyl-pyrophosphoryl-MurNAc-pentapeptide (lipid intermediate I) to form undecaprenyl-pyrophosphoryl-MurNAc-(pentapeptide)GlcNAc (lipid intermediate II). The polypeptide is UDP-N-acetylglucosamine--N-acetylmuramyl-(pentapeptide) pyrophosphoryl-undecaprenol N-acetylglucosamine transferase (Gluconobacter oxydans (strain 621H) (Gluconobacter suboxydans)).